A 292-amino-acid chain; its full sequence is MFTGSIVAIVTPMDEKGNVCRASLKKLIDYHVASGTSAIVSVGTTGESATLNHDEHADVVMMTLELADGRIPVIAGTGANATAEAISLTQRFNDSGIVGCLTVTPYYNRPSQEGLYQHFKAIAEHTDLPQILYNVPSRTGCDLLPETVGRLAKVKNIIGIKEATGNLTRVNQIKELVSDDFVLLSGDDASALDFMQLGGHGVISVTANVAARDMAQMCKLAAEGHFAEARVINQRLMPLHNKLFVEPNPIPVKWACKELGLVATDTLRLPMTPITDSGRETVRAALKHAGLL.

Threonine 45 is a pyruvate binding site. Tyrosine 133 acts as the Proton donor/acceptor in catalysis. Lysine 161 functions as the Schiff-base intermediate with substrate in the catalytic mechanism. Position 203 (isoleucine 203) interacts with pyruvate.

The protein belongs to the DapA family. Homotetramer; dimer of dimers.

It is found in the cytoplasm. The enzyme catalyses L-aspartate 4-semialdehyde + pyruvate = (2S,4S)-4-hydroxy-2,3,4,5-tetrahydrodipicolinate + H2O + H(+). Its pathway is amino-acid biosynthesis; L-lysine biosynthesis via DAP pathway; (S)-tetrahydrodipicolinate from L-aspartate: step 3/4. Functionally, catalyzes the condensation of (S)-aspartate-beta-semialdehyde [(S)-ASA] and pyruvate to 4-hydroxy-tetrahydrodipicolinate (HTPA). The chain is 4-hydroxy-tetrahydrodipicolinate synthase from Shigella boydii serotype 18 (strain CDC 3083-94 / BS512).